Here is a 276-residue protein sequence, read N- to C-terminus: 4-deoxy-L-threo-5-hexosulose-uronate ketol-isomerase 2 (276 aa).

Residues histidine 194, histidine 196, glutamate 201, and histidine 243 each contribute to the Zn(2+) site.

Belongs to the KduI family. Zn(2+) serves as cofactor.

It catalyses the reaction 5-dehydro-4-deoxy-D-glucuronate = 3-deoxy-D-glycero-2,5-hexodiulosonate. It functions in the pathway glycan metabolism; pectin degradation; 2-dehydro-3-deoxy-D-gluconate from pectin: step 4/5. Its function is as follows. Catalyzes the isomerization of 5-dehydro-4-deoxy-D-glucuronate to 3-deoxy-D-glycero-2,5-hexodiulosonate. This is 4-deoxy-L-threo-5-hexosulose-uronate ketol-isomerase 2 (kduI2) from Enterococcus faecalis (strain ATCC 700802 / V583).